The sequence spans 187 residues: Elongation factor P (187 aa).

Lys34 is subject to N6-(3,6-diaminohexanoyl)-5-hydroxylysine.

The protein belongs to the elongation factor P family. In terms of processing, may be beta-lysylated on the epsilon-amino group of Lys-34 by the combined action of EpmA and EpmB, and then hydroxylated on the C5 position of the same residue by EpmC (if this protein is present). Lysylation is critical for the stimulatory effect of EF-P on peptide-bond formation. The lysylation moiety may extend toward the peptidyltransferase center and stabilize the terminal 3-CCA end of the tRNA. Hydroxylation of the C5 position on Lys-34 may allow additional potential stabilizing hydrogen-bond interactions with the P-tRNA.

Its subcellular location is the cytoplasm. The protein operates within protein biosynthesis; polypeptide chain elongation. In terms of biological role, involved in peptide bond synthesis. Alleviates ribosome stalling that occurs when 3 or more consecutive Pro residues or the sequence PPG is present in a protein, possibly by augmenting the peptidyl transferase activity of the ribosome. Modification of Lys-34 is required for alleviation. The polypeptide is Elongation factor P (Thioalkalivibrio sulfidiphilus (strain HL-EbGR7)).